Reading from the N-terminus, the 498-residue chain is Probable malate:quinone oxidoreductase 2 (498 aa).

It belongs to the MQO family. FAD is required as a cofactor.

The enzyme catalyses (S)-malate + a quinone = a quinol + oxaloacetate. It participates in carbohydrate metabolism; tricarboxylic acid cycle; oxaloacetate from (S)-malate (quinone route): step 1/1. The polypeptide is Probable malate:quinone oxidoreductase 2 (Staphylococcus aureus (strain COL)).